The primary structure comprises 547 residues: Chaperonin GroEL (547 aa).

Residues Thr-30–Pro-33, Lys-51, Asp-87–Thr-91, Gly-415, and Asp-496 contribute to the ATP site. Positions Asp-528–Tyr-547 are disordered. Residues Gly-538–Tyr-547 show a composition bias toward gly residues.

The protein belongs to the chaperonin (HSP60) family. Forms a cylinder of 14 subunits composed of two heptameric rings stacked back-to-back. Interacts with the co-chaperonin GroES.

The protein localises to the cytoplasm. The enzyme catalyses ATP + H2O + a folded polypeptide = ADP + phosphate + an unfolded polypeptide.. Functionally, together with its co-chaperonin GroES, plays an essential role in assisting protein folding. The GroEL-GroES system forms a nano-cage that allows encapsulation of the non-native substrate proteins and provides a physical environment optimized to promote and accelerate protein folding. This chain is Chaperonin GroEL, found in Chlorobium luteolum (strain DSM 273 / BCRC 81028 / 2530) (Pelodictyon luteolum).